Reading from the N-terminus, the 262-residue chain is 3-deoxy-manno-octulosonate cytidylyltransferase (262 aa).

The protein belongs to the KdsB family.

Its subcellular location is the cytoplasm. The enzyme catalyses 3-deoxy-alpha-D-manno-oct-2-ulosonate + CTP = CMP-3-deoxy-beta-D-manno-octulosonate + diphosphate. It functions in the pathway nucleotide-sugar biosynthesis; CMP-3-deoxy-D-manno-octulosonate biosynthesis; CMP-3-deoxy-D-manno-octulosonate from 3-deoxy-D-manno-octulosonate and CTP: step 1/1. It participates in bacterial outer membrane biogenesis; lipopolysaccharide biosynthesis. In terms of biological role, activates KDO (a required 8-carbon sugar) for incorporation into bacterial lipopolysaccharide in Gram-negative bacteria. The protein is 3-deoxy-manno-octulosonate cytidylyltransferase of Acidovorax sp. (strain JS42).